Here is a 1080-residue protein sequence, read N- to C-terminus: Isoleucine--tRNA ligase (1080 aa).

Positions 48–58 (PYASGSIHLGT) match the 'HIGH' region motif. Positions 628-632 (KMSKS) match the 'KMSKS' region motif. Lys-631 lines the ATP pocket.

It belongs to the class-I aminoacyl-tRNA synthetase family. IleS type 2 subfamily. Monomer. It depends on Zn(2+) as a cofactor.

It localises to the cytoplasm. It catalyses the reaction tRNA(Ile) + L-isoleucine + ATP = L-isoleucyl-tRNA(Ile) + AMP + diphosphate. Its function is as follows. Catalyzes the attachment of isoleucine to tRNA(Ile). As IleRS can inadvertently accommodate and process structurally similar amino acids such as valine, to avoid such errors it has two additional distinct tRNA(Ile)-dependent editing activities. One activity is designated as 'pretransfer' editing and involves the hydrolysis of activated Val-AMP. The other activity is designated 'posttransfer' editing and involves deacylation of mischarged Val-tRNA(Ile). This is Isoleucine--tRNA ligase from Methanopyrus kandleri (strain AV19 / DSM 6324 / JCM 9639 / NBRC 100938).